We begin with the raw amino-acid sequence, 360 residues long: Probable dual-specificity RNA methyltransferase RlmN (360 aa).

The active-site Proton acceptor is Glu-103. A Radical SAM core domain is found at 109–342 (HEYGNSVCVT…VTIRREQGHD (234 aa)). A disulfide bond links Cys-116 and Cys-347. [4Fe-4S] cluster contacts are provided by Cys-123, Cys-127, and Cys-130. Residues 173-174 (GE), Ser-205, 228-230 (SLH), and Asn-304 each bind S-adenosyl-L-methionine. Cys-347 serves as the catalytic S-methylcysteine intermediate.

This sequence belongs to the radical SAM superfamily. RlmN family. It depends on [4Fe-4S] cluster as a cofactor.

It is found in the cytoplasm. It catalyses the reaction adenosine(2503) in 23S rRNA + 2 reduced [2Fe-2S]-[ferredoxin] + 2 S-adenosyl-L-methionine = 2-methyladenosine(2503) in 23S rRNA + 5'-deoxyadenosine + L-methionine + 2 oxidized [2Fe-2S]-[ferredoxin] + S-adenosyl-L-homocysteine. The enzyme catalyses adenosine(37) in tRNA + 2 reduced [2Fe-2S]-[ferredoxin] + 2 S-adenosyl-L-methionine = 2-methyladenosine(37) in tRNA + 5'-deoxyadenosine + L-methionine + 2 oxidized [2Fe-2S]-[ferredoxin] + S-adenosyl-L-homocysteine. Its function is as follows. Specifically methylates position 2 of adenine 2503 in 23S rRNA and position 2 of adenine 37 in tRNAs. This is Probable dual-specificity RNA methyltransferase RlmN from Bacillus pumilus (strain SAFR-032).